The sequence spans 419 residues: Double-stranded RNA-binding protein 1 (419 aa).

DRBM domains are found at residues 15–84 and 101–170; these read VFKS…ELAK and LCKN…AIQS. Residues 207–222 carry the Bipartite nuclear localization motif; the sequence is KARKAQFKKKAQKGKR. Tandem repeats lie at residues 247–274, 275–302, 303–330, 331–358, 359–386, and 387–414. Residues 247 to 414 are 6 X 28 AA repeats of E-K-I-E-T-T-P-N-L-E-[PS]-[PS]-S-C-M-[NS]-G-L-K-E-A-A-F-G-S-V-E-T; it reads EKIETTPNLE…KEAAFGSVET (168 aa).

As to quaternary structure, homodimer. Heterodimer with DRB2, DRB4 or DRB5. Interacts with SE and DCL1. Interacts with RCF3, RS40 and RS41. Expressed in rosette and cauline leaves, stems, roots, flowers and siliques.

It localises to the nucleus. It is found in the nucleus speckle. Double-stranded RNA-binding protein involved in RNA-mediated post-transcriptional gene silencing (PTGS). Functions in the microRNAs (miRNAs) biogenesis by assisting DICER-LIKE 1 (DCL1) in the accurate processing from primary miRNAs (pri-miRNAs) to miRNAs in the nucleus. Forms a complex with SERRATE (SE) and DCL1 to promote accurate processing of pri-miRNAs by DCL1. Binds and assist DCL1 for accurate processing of precursor miRNAs (pre-miRNA). Indirectly involved in the production of trans-acting small interfering RNAs (ta-siRNAs) derived from the TAS1, TAS2 or TAS3 endogenous transcripts by participating in the production of their initiating miRNAs. Involved with argonaute 1 (AGO1) in the guide strand selection from miRNA duplexes, presumably by directional loading of the miRNA duplex (guide stand and passenger strand) onto the RNA-induced silencing complex (RISC) for passenger strand degradation. Does not participate in sense transgene-induced post-transcriptional gene silencing (S-PTGS). Involved in several plant development aspects and response to hormones through its role in miRNAs processing. The protein is Double-stranded RNA-binding protein 1 (DRB1) of Arabidopsis thaliana (Mouse-ear cress).